The following is a 114-amino-acid chain: Putative pterin-4-alpha-carbinolamine dehydratase (114 aa).

It belongs to the pterin-4-alpha-carbinolamine dehydratase family.

The enzyme catalyses (4aS,6R)-4a-hydroxy-L-erythro-5,6,7,8-tetrahydrobiopterin = (6R)-L-erythro-6,7-dihydrobiopterin + H2O. This Methylococcus capsulatus (strain ATCC 33009 / NCIMB 11132 / Bath) protein is Putative pterin-4-alpha-carbinolamine dehydratase.